The sequence spans 476 residues: Serine--tRNA ligase (476 aa).

280–282 is a binding site for L-serine; sequence TAE. Residue 311–313 coordinates ATP; sequence RAE. Glu-334 provides a ligand contact to L-serine. ATP is bound at residue 401-404; that stretch reads EISS. Ser-436 lines the L-serine pocket.

It belongs to the class-II aminoacyl-tRNA synthetase family. Type-1 seryl-tRNA synthetase subfamily. As to quaternary structure, homodimer. The tRNA molecule binds across the dimer.

The protein localises to the cytoplasm. The catalysed reaction is tRNA(Ser) + L-serine + ATP = L-seryl-tRNA(Ser) + AMP + diphosphate + H(+). It carries out the reaction tRNA(Sec) + L-serine + ATP = L-seryl-tRNA(Sec) + AMP + diphosphate + H(+). It participates in aminoacyl-tRNA biosynthesis; selenocysteinyl-tRNA(Sec) biosynthesis; L-seryl-tRNA(Sec) from L-serine and tRNA(Sec): step 1/1. Functionally, catalyzes the attachment of serine to tRNA(Ser). Is also able to aminoacylate tRNA(Sec) with serine, to form the misacylated tRNA L-seryl-tRNA(Sec), which will be further converted into selenocysteinyl-tRNA(Sec). The chain is Serine--tRNA ligase from Rhodopseudomonas palustris (strain HaA2).